A 375-amino-acid polypeptide reads, in one-letter code: UDP-N-acetylglucosamine--N-acetylmuramyl-(pentapeptide) pyrophosphoryl-undecaprenol N-acetylglucosamine transferase (375 aa).

Residues 13-15 (TGG), Asn124, Arg165, Ser193, and Gln294 contribute to the UDP-N-acetyl-alpha-D-glucosamine site.

Belongs to the glycosyltransferase 28 family. MurG subfamily.

It localises to the cell inner membrane. The catalysed reaction is di-trans,octa-cis-undecaprenyl diphospho-N-acetyl-alpha-D-muramoyl-L-alanyl-D-glutamyl-meso-2,6-diaminopimeloyl-D-alanyl-D-alanine + UDP-N-acetyl-alpha-D-glucosamine = di-trans,octa-cis-undecaprenyl diphospho-[N-acetyl-alpha-D-glucosaminyl-(1-&gt;4)]-N-acetyl-alpha-D-muramoyl-L-alanyl-D-glutamyl-meso-2,6-diaminopimeloyl-D-alanyl-D-alanine + UDP + H(+). It functions in the pathway cell wall biogenesis; peptidoglycan biosynthesis. In terms of biological role, cell wall formation. Catalyzes the transfer of a GlcNAc subunit on undecaprenyl-pyrophosphoryl-MurNAc-pentapeptide (lipid intermediate I) to form undecaprenyl-pyrophosphoryl-MurNAc-(pentapeptide)GlcNAc (lipid intermediate II). In Brucella anthropi (strain ATCC 49188 / DSM 6882 / CCUG 24695 / JCM 21032 / LMG 3331 / NBRC 15819 / NCTC 12168 / Alc 37) (Ochrobactrum anthropi), this protein is UDP-N-acetylglucosamine--N-acetylmuramyl-(pentapeptide) pyrophosphoryl-undecaprenol N-acetylglucosamine transferase.